We begin with the raw amino-acid sequence, 334 residues long: Methylthioribose-1-phosphate isomerase (334 aa).

Residues 44–46 (RGA), Arg-87, and Gln-192 each bind substrate. Residue Asp-233 is the Proton donor of the active site. 243 to 244 (NK) is a substrate binding site.

Belongs to the eIF-2B alpha/beta/delta subunits family. MtnA subfamily.

It carries out the reaction 5-(methylsulfanyl)-alpha-D-ribose 1-phosphate = 5-(methylsulfanyl)-D-ribulose 1-phosphate. It participates in amino-acid biosynthesis; L-methionine biosynthesis via salvage pathway; L-methionine from S-methyl-5-thio-alpha-D-ribose 1-phosphate: step 1/6. In terms of biological role, catalyzes the interconversion of methylthioribose-1-phosphate (MTR-1-P) into methylthioribulose-1-phosphate (MTRu-1-P). This chain is Methylthioribose-1-phosphate isomerase, found in Dehalococcoides mccartyi (strain ATCC BAA-2266 / KCTC 15142 / 195) (Dehalococcoides ethenogenes (strain 195)).